Here is a 403-residue protein sequence, read N- to C-terminus: Pantothenate kinase (403 aa).

Residues Ser80, Ser82, and Ser84 each carry the phosphoserine modification.

Belongs to the type II pantothenate kinase family.

It is found in the cytoplasm. The protein localises to the nucleus. The enzyme catalyses (R)-pantothenate + ATP = (R)-4'-phosphopantothenate + ADP + H(+). It participates in cofactor biosynthesis; coenzyme A biosynthesis; CoA from (R)-pantothenate: step 1/5. Regulated by feedback inhibition by malonyl-CoA. In terms of biological role, plays a role in the physiological regulation of the intracellular CoA concentration. The polypeptide is Pantothenate kinase (Schizosaccharomyces pombe (strain 972 / ATCC 24843) (Fission yeast)).